A 190-amino-acid polypeptide reads, in one-letter code: dCTP deaminase (190 aa).

DCTP is bound at residue 113–118 (KSTYAR). Glutamate 139 functions as the Proton donor/acceptor in the catalytic mechanism. The dCTP site is built by glutamine 158, tyrosine 172, lysine 181, and glutamine 182.

This sequence belongs to the dCTP deaminase family. Homotrimer.

It catalyses the reaction dCTP + H2O + H(+) = dUTP + NH4(+). The protein operates within pyrimidine metabolism; dUMP biosynthesis; dUMP from dCTP (dUTP route): step 1/2. In terms of biological role, catalyzes the deamination of dCTP to dUTP. The sequence is that of dCTP deaminase from Chlamydia trachomatis serovar A (strain ATCC VR-571B / DSM 19440 / HAR-13).